Here is a 528-residue protein sequence, read N- to C-terminus: Aspartic proteinase-like protein 1 (528 aa).

Positions 1–22 (MVSRSAFLLFCVLFLATEETLA) are cleaved as a signal peptide. Residues 100–449 (HYTWIDIGTP…DRENMKLGWS (350 aa)) form the Peptidase A1 domain. Residue Asp-118 is part of the active site. 2 N-linked (GlcNAc...) asparagine glycosylation sites follow: Asn-193 and Asn-217. The active site involves Asp-333. N-linked (GlcNAc...) asparagine glycosylation is found at Asn-358 and Asn-391. Residues 451–503 (SKCQEDKIEPPQASPGSTSSPNPLPTDEQQSRGGHAVSPAIAGKTPSKTPSSS) form a disordered region. Residues 464–482 (SPGSTSSPNPLPTDEQQSR) show a composition bias toward polar residues. Residues 494 to 503 (KTPSKTPSSS) are compositionally biased toward low complexity. Residue Ser-503 is the site of GPI-anchor amidated serine attachment. A propeptide spans 504–528 (SSYSFSSIMRLFNSLLLLHWLASLM) (removed in mature form).

It belongs to the peptidase A1 family.

It is found in the cell membrane. The sequence is that of Aspartic proteinase-like protein 1 from Arabidopsis thaliana (Mouse-ear cress).